Here is a 1068-residue protein sequence, read N- to C-terminus: Rho family-interacting cell polarization regulator 2 (1068 aa).

A phosphoserine; in isoform mark is found at S21 and S37. Residues 45–73 (LKKPQAKLKKMHNLGHKNNNPPKEPQPKR) form a disordered region. The segment covering 48 to 59 (PQAKLKKMHNLG) has biased composition (basic residues). The tract at residues 55-113 (MHNLGHKNNNPPKEPQPKRVEEVYRALKNGLDEYLEVHQTELDKLTAQLKDMKRNSRLG) is involved in cell filopodia formation. Residues 83-112 (NGLDEYLEVHQTELDKLTAQLKDMKRNSRL) are a coiled coil. Residue S341 is modified to Phosphoserine; in isoform 2. A compositionally biased stretch (polar residues) spans 474–491 (QNEGMDDTSSASSRNSLG). Positions 474–524 (QNEGMDDTSSASSRNSLGEGQEPKSHLKEEDPEEPRKPASAPSEACRRQSS) are disordered. Over residues 494 to 510 (QEPKSHLKEEDPEEPRK) the composition is skewed to basic and acidic residues. At S523 the chain carries Phosphoserine; in isoform 2. Phosphoserine is present on S573. The residue at position 585 (S585) is a Phosphoserine; in isoform 2. The stretch at 768-793 (VARSLLEKLSRQIQVMEKLAAVSDEN) forms a coiled coil.

Belongs to the RIPOR family. Homooligomer; homooligomerization is regulated by RHOC and leads to the formation of concatemers through the association of N- and C-termini. Interacts with 14-3-3 proteins; these interactions occur during myogenic cell differentiation. Interacts with HDAC6; this interaction occurs during early myogenic differentiation and prevents HDAC6 to deacetylate tubulin. Interacts with DYSF; this interaction occurs during early myogenic differentiation. Interacts with MYOF. Interacts with RHOC. Isoform 1 and isoform 2 interact (via active GTP- or inactive GDP-bound forms) with RHOA; these interactions are direct, block the loading of GTP to RHOA and decrease upon chemokine CCL19 stimulation in primary T lymphocytes. Isoform 2 interacts (phosphorylated form) with HDAC6; this interaction induces T cell proliferation arrest. Isoform 2 interacts (phosphorylated form) with 14-3-3 proteins; these interactions induces T cell proliferation arrest. Isoform 2 interacts with 14-3-3 proteins. Isoform 2 interacts (via phosphorylated form) with YWHAB; this interaction occurs in a chemokine-dependent manner and does not compete for binding of RIPOR2 with RHOA nor blocks inhibition of RIPOR2-mediated RHOA activity. Isoform 2 interacts with YWHAE. Isoform 2 interacts with YWHAQ. In terms of processing, phosphorylated. Isoform 2 is phosphorylated in T cells. Chemokine-induced phosphorylation of isoform 2 in neutrophils occurs in a PKC- and AKT-dependent manner, resulting in RIPOR2 interaction with YWHAB and stabilization. Isoform 2 is phosphorylated by PKCA, AKT1 and MAPKAPK1A; in vitro. Post-translationally, acetylated during myogenic differentiation. In terms of tissue distribution, expressed in primary fetal mononuclear myoblast. Expressed strongly in naive T lymphocytes. Expressed weakly in activated T lymphocytes (at protein level). Expressed in blood cells and adult tissues of hematopoietic origin, such as the secondary lymphoid organs. Expressed in cytotrophoblast.

It is found in the cytoplasm. The protein localises to the cytoskeleton. It localises to the cell projection. The protein resides in the filopodium. Its subcellular location is the stereocilium. It is found in the stereocilium membrane. The protein localises to the apical cell membrane. Its function is as follows. Acts as an inhibitor of the small GTPase RHOA and plays several roles in the regulation of myoblast and hair cell differentiation, lymphocyte T proliferation and neutrophil polarization. Inhibits chemokine-induced T lymphocyte responses, such as cell adhesion, polarization and migration. Involved also in the regulation of neutrophil polarization, chemotaxis and adhesion. Required for normal development of inner and outer hair cell stereocilia within the cochlea of the inner ear. Plays a role for maintaining the structural organization of the basal domain of stereocilia. Involved in mechanosensory hair cell function. Required for normal hearing. Functionally, acts as an inhibitor of the small GTPase RHOA. Plays a role in fetal mononuclear myoblast differentiation by promoting filopodia and myotube formation. Maintains naive T lymphocytes in a quiescent state. This is Rho family-interacting cell polarization regulator 2 (RIPOR2) from Homo sapiens (Human).